Consider the following 459-residue polypeptide: E3 ubiquitin-protein ligase RNF14 (459 aa).

In terms of domain architecture, RWD spans 10–129 (DELLALASIY…QFLKEETLDF (120 aa)). Residues 141–169 (SGSQPQCEPAQKHAADASGEKSKVQDLDP) are disordered. The segment covering 150–169 (AQKHAADASGEKSKVQDLDP) has biased composition (basic and acidic residues). A TRIAD supradomain region spans residues 200–441 (KAFCCGICYS…NPDSPCYNQL (242 aa)). Residues C204, C207, C222, H224, C227, C230, C249, C254, C293, C298, C313, C316, C321, C324, H329, C334, C388, and C391 each coordinate Zn(2+). 2 RING-type zinc fingers span residues 204–249 (CGIC…CLNC) and 204–254 (CGIC…EPKC). An IBR-type zinc finger spans residues 273–334 (ARYDRLLLQS…RRSYHGLSHC (62 aa)). The RING-type 2; atypical zinc finger occupies 388–417 (CPCCGTNIQKAHGCNKMTCSSCQKYFCWIC). C401 is an active-site residue. Zn(2+) is bound by residues C406, C409, C414, C417, H429, and C437.

It belongs to the RBR family. RNF14 subfamily.

It localises to the cytoplasm. It is found in the nucleus. It catalyses the reaction [E2 ubiquitin-conjugating enzyme]-S-ubiquitinyl-L-cysteine + [acceptor protein]-L-lysine = [E2 ubiquitin-conjugating enzyme]-L-cysteine + [acceptor protein]-N(6)-ubiquitinyl-L-lysine.. It functions in the pathway protein modification; protein ubiquitination. In terms of biological role, E3 ubiquitin-protein ligase that plays a key role in the RNF14-RNF25 translation quality control pathway, a pathway that takes place when a ribosome has stalled during translation, and which promotes ubiquitination and degradation of translation factors on stalled ribosomes. Recruited to stalled ribosomes by the ribosome collision sensor GCN1 and mediates 'Lys-6'-linked ubiquitination of target proteins, leading to their degradation. Mediates ubiquitination of eef1a1/eEF1A and etf1/eRF1 translation factors on stalled ribosomes, leading to their degradation. Specifically required to resolve RNA-protein cross-links caused by reactive aldehydes, which trigger translation stress by stalling ribosomes: acts by catalying 'Lys-6'-linked ubiquitination of RNA-protein cross-links, leading to their removal by the ATP-dependent unfoldase VCP and subsequent degradation by the proteasome. Independently of its function in the response to stalled ribosomes, acts as a regulator of transcription in Wnt signaling via its interaction with TCF transcription factors (tcf7/tcf1, tcf7l1/tcf3 and tcf7l2/tcf4). This is E3 ubiquitin-protein ligase RNF14 from Danio rerio (Zebrafish).